The primary structure comprises 415 residues: Mitogen-activated protein kinase MPS1 (415 aa).

In terms of domain architecture, Protein kinase spans 23-314 (YTVTKELGQG…VEQALEHPYL (292 aa)). Residues 29–37 (LGQGAYGIV) and Lys-52 contribute to the ATP site. The interval 363–394 (GAGGHGAPHAPQVPIPAGAGQGQWKAEDPRPQ) is disordered.

Belongs to the protein kinase superfamily. Ser/Thr protein kinase family. MAP kinase subfamily. In terms of assembly, interacts with transcription factor MIG1. Interacts with transcription factor SWI6. It depends on Mg(2+) as a cofactor.

It carries out the reaction L-seryl-[protein] + ATP = O-phospho-L-seryl-[protein] + ADP + H(+). It catalyses the reaction L-threonyl-[protein] + ATP = O-phospho-L-threonyl-[protein] + ADP + H(+). Mitogen-activated protein kinase; part of the MCK1-MKK2-MPS1 MAP kinase (MAPK) signal transduction cascade that is essential for cell wall integrity and plant infection, but not for plant defense responses. Beside its role in pathogenesis, the MPS1 cascade is active in conidiation and cellular stress responses. Targets downstream of the MPS1-MAPK pathway include transcription factors MIG1 and SWI6, as well as GSK1 and MPG1. The sequence is that of Mitogen-activated protein kinase MPS1 from Pyricularia oryzae (strain 70-15 / ATCC MYA-4617 / FGSC 8958) (Rice blast fungus).